Here is a 366-residue protein sequence, read N- to C-terminus: Phenylalanine--tRNA ligase alpha subunit (366 aa).

Glutamate 259 contacts Mg(2+).

Belongs to the class-II aminoacyl-tRNA synthetase family. Phe-tRNA synthetase alpha subunit type 1 subfamily. Tetramer of two alpha and two beta subunits. The cofactor is Mg(2+).

It is found in the cytoplasm. The catalysed reaction is tRNA(Phe) + L-phenylalanine + ATP = L-phenylalanyl-tRNA(Phe) + AMP + diphosphate + H(+). The polypeptide is Phenylalanine--tRNA ligase alpha subunit (Erythrobacter litoralis (strain HTCC2594)).